We begin with the raw amino-acid sequence, 68 residues long: Large ribosomal subunit protein uL29 (68 aa).

The protein belongs to the universal ribosomal protein uL29 family.

The chain is Large ribosomal subunit protein uL29 from Acidiphilium cryptum (strain JF-5).